We begin with the raw amino-acid sequence, 338 residues long: Phosphatidylinositol:ceramide inositolphosphotransferase (338 aa).

At 1-36 (MTSHVTAHDVGGNEDIGTDHVPWYKQPLPLCTQVMR) the chain is on the cytoplasmic side. Residues 37-57 (FILLLLLTVMFLGVAILVANA) form a helical membrane-spanning segment. The Extracellular segment spans residues 58 to 87 (RMPDPEKVRPLPDLLLESIPKVALLENGTN). Residues 88–108 (VIIFLLNATTVVVGFKVFLLE) traverse the membrane as a helical segment. Residues 109-116 (RHMNGLPR) lie on the Cytoplasmic side of the membrane. Residues 117–137 (VTFLVGVPKIGSFLNRMAFGV) traverse the membrane as a helical segment. Over 138 to 152 (LDSGRRPFPLKNVFP) the chain is Extracellular. Residues 153–173 (IMAIRFLTSYAVVMVFRAFVI) form a helical membrane-spanning segment. The Cytoplasmic segment spans residues 174 to 189 (MGTSYPATDNHCQNPQ). Residues 190-210 (VIEHPVLNVILTLVTLGSGAI) traverse the membrane as a helical segment. Residues 211–222 (HCGDLMFSGHTM) lie on the Extracellular side of the membrane. H220 is an active-site residue. A helical transmembrane segment spans residues 223 to 243 (ILSLAFILAWDYSPFLHPWAV). Residues 244–338 (RVWVSVLLPI…TDASAALPEH (95 aa)) are Cytoplasmic-facing. Catalysis depends on residues H264 and D268.

This sequence belongs to the sphingomyelin synthase family.

It is found in the membrane. In terms of biological role, bidirectional lipid inositolphosphotransferase capable of converting phosphatidylinositol (PI) and ceramide to inositol-phosphorylceramide (IPC) and diacylglycerol (DAG) and vice versa. Direction is dependent on the relative concentrations of DAG and ceramide as phosphoinositol acceptors. Essential for viability of the pathogenic bloodstream stage of this human protozoan parasite and, consequently, can be considered as potential drug target. The chain is Phosphatidylinositol:ceramide inositolphosphotransferase from Leishmania major.